We begin with the raw amino-acid sequence, 78 residues long: UPF0612 protein new22 (78 aa).

Belongs to the UPF0612 family.

The sequence is that of UPF0612 protein new22 (new22) from Schizosaccharomyces pombe (strain 972 / ATCC 24843) (Fission yeast).